The sequence spans 525 residues: 2-isopropylmalate synthase (525 aa).

In terms of domain architecture, Pyruvate carboxyltransferase spans Val12–Thr274. Residues Asp21, His209, His211, and Asn245 each contribute to the Mn(2+) site. The segment at Lys398–Ser525 is regulatory domain.

The protein belongs to the alpha-IPM synthase/homocitrate synthase family. LeuA type 1 subfamily. In terms of assembly, homodimer. It depends on Mn(2+) as a cofactor.

The protein resides in the cytoplasm. The enzyme catalyses 3-methyl-2-oxobutanoate + acetyl-CoA + H2O = (2S)-2-isopropylmalate + CoA + H(+). Its pathway is amino-acid biosynthesis; L-leucine biosynthesis; L-leucine from 3-methyl-2-oxobutanoate: step 1/4. Catalyzes the condensation of the acetyl group of acetyl-CoA with 3-methyl-2-oxobutanoate (2-ketoisovalerate) to form 3-carboxy-3-hydroxy-4-methylpentanoate (2-isopropylmalate). The protein is 2-isopropylmalate synthase of Bradyrhizobium sp. (strain ORS 278).